A 239-amino-acid chain; its full sequence is 4-hydroxy-tetrahydrodipicolinate reductase (239 aa).

Residues 8–13 (GSTGKM), 78–80 (GTT), and 102–105 (SANM) each bind NAD(+). Catalysis depends on histidine 134, which acts as the Proton donor/acceptor. Histidine 135 lines the (S)-2,3,4,5-tetrahydrodipicolinate pocket. Lysine 138 functions as the Proton donor in the catalytic mechanism. (S)-2,3,4,5-tetrahydrodipicolinate is bound at residue 144–145 (GT).

Belongs to the DapB family.

It localises to the cytoplasm. It carries out the reaction (S)-2,3,4,5-tetrahydrodipicolinate + NAD(+) + H2O = (2S,4S)-4-hydroxy-2,3,4,5-tetrahydrodipicolinate + NADH + H(+). It catalyses the reaction (S)-2,3,4,5-tetrahydrodipicolinate + NADP(+) + H2O = (2S,4S)-4-hydroxy-2,3,4,5-tetrahydrodipicolinate + NADPH + H(+). The protein operates within amino-acid biosynthesis; L-lysine biosynthesis via DAP pathway; (S)-tetrahydrodipicolinate from L-aspartate: step 4/4. Catalyzes the conversion of 4-hydroxy-tetrahydrodipicolinate (HTPA) to tetrahydrodipicolinate. The chain is 4-hydroxy-tetrahydrodipicolinate reductase from Rickettsia conorii (strain ATCC VR-613 / Malish 7).